A 236-amino-acid polypeptide reads, in one-letter code: 2,3,4,5-tetrahydropyridine-2,6-dicarboxylate N-acetyltransferase (236 aa).

Belongs to the transferase hexapeptide repeat family. DapH subfamily.

It carries out the reaction (S)-2,3,4,5-tetrahydrodipicolinate + acetyl-CoA + H2O = L-2-acetamido-6-oxoheptanedioate + CoA. It functions in the pathway amino-acid biosynthesis; L-lysine biosynthesis via DAP pathway; LL-2,6-diaminopimelate from (S)-tetrahydrodipicolinate (acetylase route): step 1/3. Catalyzes the transfer of an acetyl group from acetyl-CoA to tetrahydrodipicolinate. The protein is 2,3,4,5-tetrahydropyridine-2,6-dicarboxylate N-acetyltransferase of Clostridium botulinum (strain ATCC 19397 / Type A).